We begin with the raw amino-acid sequence, 382 residues long: Succinate--CoA ligase [ADP-forming] subunit beta (382 aa).

An ATP-grasp domain is found at Arg-9–Arg-237. ATP-binding positions include Lys-45, Gly-52–Gly-54, Ile-94, and Glu-99. Positions 192 and 206 each coordinate Mg(2+). Residues Asn-257 and Gly-314–Thr-316 each bind substrate.

This sequence belongs to the succinate/malate CoA ligase beta subunit family. As to quaternary structure, heterotetramer of two alpha and two beta subunits. Mg(2+) is required as a cofactor.

The enzyme catalyses succinate + ATP + CoA = succinyl-CoA + ADP + phosphate. The catalysed reaction is GTP + succinate + CoA = succinyl-CoA + GDP + phosphate. It functions in the pathway carbohydrate metabolism; tricarboxylic acid cycle; succinate from succinyl-CoA (ligase route): step 1/1. Functionally, succinyl-CoA synthetase functions in the citric acid cycle (TCA), coupling the hydrolysis of succinyl-CoA to the synthesis of either ATP or GTP and thus represents the only step of substrate-level phosphorylation in the TCA. The beta subunit provides nucleotide specificity of the enzyme and binds the substrate succinate, while the binding sites for coenzyme A and phosphate are found in the alpha subunit. This Chloroflexus aggregans (strain MD-66 / DSM 9485) protein is Succinate--CoA ligase [ADP-forming] subunit beta.